The sequence spans 374 residues: O-methyltransferase acrG (374 aa).

S-adenosyl-L-homocysteine-binding residues include tyrosine 19, asparagine 70, aspartate 96, serine 128, and phenylalanine 129. Mg(2+) is bound at residue phenylalanine 245.

It belongs to the methyltransferase superfamily. Type-7 methyltransferase family.

The protein operates within secondary metabolite biosynthesis. O-methyltransferase; part of the cluster that mediates the biosynthesis of acurin A, a highly reduced polyketide coupled to a serine via a peptide bond. The activities of the highly reducing polyketide synthase acrA and the nonribosomal peptide synthetase acrB are collectively responsible for the synthesis of the acurin A core structure with a heptaketide backbone produced by acrA covalently fused to a L-serine by acrB. After the formation of the PK-NRP hybrid product, it is detached from acrB by reductive release to set up the formation of the lactam ring by aldol condensation. The hydrolyase acrC then catalyzes water loss to generate a double bond in the ring. This double bond is probably reduced, which is followed by three oxidations at C-22 to generate the carboxylic acid moiety, involving probably the FAD-binding monooxygenase acrE and the cytochrome P450 monooxygenases acrD and acrF. Finally, a last methylation step performed by the O-methyltransferase acrG leads to the production of acurin A. The sequence is that of O-methyltransferase acrG from Aspergillus aculeatus (strain ATCC 16872 / CBS 172.66 / WB 5094).